The chain runs to 317 residues: Ferrochelatase (317 aa).

Positions 192 and 271 each coordinate Fe cation.

This sequence belongs to the ferrochelatase family.

It is found in the cytoplasm. It catalyses the reaction heme b + 2 H(+) = protoporphyrin IX + Fe(2+). The protein operates within porphyrin-containing compound metabolism; protoheme biosynthesis; protoheme from protoporphyrin-IX: step 1/1. Catalyzes the ferrous insertion into protoporphyrin IX. In Geobacter sp. (strain M21), this protein is Ferrochelatase.